We begin with the raw amino-acid sequence, 852 residues long: Bifunctional uridylyltransferase/uridylyl-removing enzyme (852 aa).

The interval 1–318 (MPENLSSALE…STPMRVTLRI (318 aa)) is uridylyltransferase. The interval 319–672 (DDDYIQVNNQ…SRILPQSDSF (354 aa)) is uridylyl-removing. The HD domain maps to 436–558 (VDDHILAVVR…VQTHERLSAL (123 aa)). ACT domains are found at residues 673 to 757 (QVMV…SCNR) and 785 to 852 (SVEI…EQLA).

This sequence belongs to the GlnD family. Requires Mg(2+) as cofactor.

The catalysed reaction is [protein-PII]-L-tyrosine + UTP = [protein-PII]-uridylyl-L-tyrosine + diphosphate. It catalyses the reaction [protein-PII]-uridylyl-L-tyrosine + H2O = [protein-PII]-L-tyrosine + UMP + H(+). Its activity is regulated as follows. Uridylyltransferase (UTase) activity is inhibited by glutamine, while glutamine activates uridylyl-removing (UR) activity. Functionally, modifies, by uridylylation and deuridylylation, the PII regulatory proteins (GlnB and homologs), in response to the nitrogen status of the cell that GlnD senses through the glutamine level. Under low glutamine levels, catalyzes the conversion of the PII proteins and UTP to PII-UMP and PPi, while under higher glutamine levels, GlnD hydrolyzes PII-UMP to PII and UMP (deuridylylation). Thus, controls uridylylation state and activity of the PII proteins, and plays an important role in the regulation of nitrogen assimilation and metabolism. The polypeptide is Bifunctional uridylyltransferase/uridylyl-removing enzyme (Neisseria gonorrhoeae (strain NCCP11945)).